A 332-amino-acid polypeptide reads, in one-letter code: Small ribosomal subunit biogenesis GTPase RsgA (332 aa).

In terms of domain architecture, CP-type G spans 103–259; it reads RQQLIAANLD…LIDTPGMREL (157 aa). GTP-binding positions include 148–151 and 201–209; these read TKVD and GSSGAGKST. Positions 281, 286, 288, and 294 each coordinate Zn(2+).

Belongs to the TRAFAC class YlqF/YawG GTPase family. RsgA subfamily. As to quaternary structure, monomer. Associates with 30S ribosomal subunit, binds 16S rRNA. It depends on Zn(2+) as a cofactor.

The protein resides in the cytoplasm. In terms of biological role, one of several proteins that assist in the late maturation steps of the functional core of the 30S ribosomal subunit. Helps release RbfA from mature subunits. May play a role in the assembly of ribosomal proteins into the subunit. Circularly permuted GTPase that catalyzes slow GTP hydrolysis, GTPase activity is stimulated by the 30S ribosomal subunit. The protein is Small ribosomal subunit biogenesis GTPase RsgA of Xylella fastidiosa (strain M23).